The sequence spans 30 residues: Trypsin inhibitor 3 (30 aa).

Disulfide bonds link C4–C21, C11–C23, and C17–C29.

This sequence belongs to the protease inhibitor I7 (squash-type serine protease inhibitor) family.

It is found in the secreted. Functionally, inhibits lysyl endopeptidase and trypsin. The sequence is that of Trypsin inhibitor 3 from Cucumis melo var. conomon (Oriental pickling melon).